Reading from the N-terminus, the 431-residue chain is Gamma-glutamyl phosphate reductase (431 aa).

The protein belongs to the gamma-glutamyl phosphate reductase family.

It is found in the cytoplasm. The enzyme catalyses L-glutamate 5-semialdehyde + phosphate + NADP(+) = L-glutamyl 5-phosphate + NADPH + H(+). Its pathway is amino-acid biosynthesis; L-proline biosynthesis; L-glutamate 5-semialdehyde from L-glutamate: step 2/2. Functionally, catalyzes the NADPH-dependent reduction of L-glutamate 5-phosphate into L-glutamate 5-semialdehyde and phosphate. The product spontaneously undergoes cyclization to form 1-pyrroline-5-carboxylate. The polypeptide is Gamma-glutamyl phosphate reductase (Trichodesmium erythraeum (strain IMS101)).